Here is a 171-residue protein sequence, read N- to C-terminus: Shikimate kinase (171 aa).

11–16 (ATGKTT) contributes to the ATP binding site. T15 lines the Mg(2+) pocket. Substrate contacts are provided by D33, R57, and G79. ATP is bound at residue R117. Substrate is bound at residue R136.

This sequence belongs to the shikimate kinase family. In terms of assembly, monomer. Mg(2+) is required as a cofactor.

It localises to the cytoplasm. It catalyses the reaction shikimate + ATP = 3-phosphoshikimate + ADP + H(+). Its pathway is metabolic intermediate biosynthesis; chorismate biosynthesis; chorismate from D-erythrose 4-phosphate and phosphoenolpyruvate: step 5/7. Its function is as follows. Catalyzes the specific phosphorylation of the 3-hydroxyl group of shikimic acid using ATP as a cosubstrate. The sequence is that of Shikimate kinase from Thermoanaerobacter pseudethanolicus (strain ATCC 33223 / 39E) (Clostridium thermohydrosulfuricum).